Reading from the N-terminus, the 328-residue chain is Tetraacyldisaccharide 4'-kinase (328 aa).

52–59 is a binding site for ATP; it reads NAGGTGKT.

This sequence belongs to the LpxK family.

The enzyme catalyses a lipid A disaccharide + ATP = a lipid IVA + ADP + H(+). The protein operates within glycolipid biosynthesis; lipid IV(A) biosynthesis; lipid IV(A) from (3R)-3-hydroxytetradecanoyl-[acyl-carrier-protein] and UDP-N-acetyl-alpha-D-glucosamine: step 6/6. Its function is as follows. Transfers the gamma-phosphate of ATP to the 4'-position of a tetraacyldisaccharide 1-phosphate intermediate (termed DS-1-P) to form tetraacyldisaccharide 1,4'-bis-phosphate (lipid IVA). This chain is Tetraacyldisaccharide 4'-kinase, found in Jannaschia sp. (strain CCS1).